The primary structure comprises 219 residues: MRNTDTPIAVEGYPFIAGFAAATLLLALLGQFLHLGFFVPATLFFVLTVFTVFFFRNPERVTPGDENTVVAPADGEVIFLGKVIEPHTNGEFEKISIFMSVFNVHVNRAPISGKVVDGFYTKGKFFDVRDERASFENEQQGLVLETAAGLRMVVVQVAGLIARRIVCYAKTGDSLSRGRRYGLIRFGSRLDIYLPLGTRIDLVMGQKTVAGETVLGILP.

Residue Ser188 is the Schiff-base intermediate with substrate; via pyruvic acid of the active site. A Pyruvic acid (Ser); by autocatalysis modification is found at Ser188.

Belongs to the phosphatidylserine decarboxylase family. PSD-A subfamily. In terms of assembly, heterodimer of a large membrane-associated beta subunit and a small pyruvoyl-containing alpha subunit. Pyruvate serves as cofactor. Post-translationally, is synthesized initially as an inactive proenzyme. Formation of the active enzyme involves a self-maturation process in which the active site pyruvoyl group is generated from an internal serine residue via an autocatalytic post-translational modification. Two non-identical subunits are generated from the proenzyme in this reaction, and the pyruvate is formed at the N-terminus of the alpha chain, which is derived from the carboxyl end of the proenzyme. The post-translation cleavage follows an unusual pathway, termed non-hydrolytic serinolysis, in which the side chain hydroxyl group of the serine supplies its oxygen atom to form the C-terminus of the beta chain, while the remainder of the serine residue undergoes an oxidative deamination to produce ammonia and the pyruvoyl prosthetic group on the alpha chain.

The protein resides in the cell membrane. The enzyme catalyses a 1,2-diacyl-sn-glycero-3-phospho-L-serine + H(+) = a 1,2-diacyl-sn-glycero-3-phosphoethanolamine + CO2. Its pathway is phospholipid metabolism; phosphatidylethanolamine biosynthesis; phosphatidylethanolamine from CDP-diacylglycerol: step 2/2. Catalyzes the formation of phosphatidylethanolamine (PtdEtn) from phosphatidylserine (PtdSer). This chain is Phosphatidylserine decarboxylase proenzyme, found in Geobacter sp. (strain M21).